Reading from the N-terminus, the 748-residue chain is MFDIKRQEIDWGGKKLTLETGQVARQADGAVIATLGETVVLCAVTAAKTVKEGQDFFPLTVHYQEKYSAAGRIPGGFFKRERGATERETLISRLIDRPIRPLFPEGFYNETLVIAQVMSYDGENEPDILAMIAASAALALSGVPFLGPIGAARVGYQDGEFILNPTLEQLEKSDLDLVVGATRDAVMMVESEANELPEEVMLNAVSFAHESLQPVIKAIINLAEQAAKEPWELVSYDDSALAAKVEELCYDNFDKAYRLTRKAERVDALSKAKAVLDEAFPEADPTEKLRIQKLAKKLEAKIVRTAILKEGRRIDGRDLKTVRPIRSQVGFLPRTHGSALFTRGETQALVSTTLGTADAEQMIDGLTGLHYERFMLHYNFPPYSVGEVGRFGAPGRREIGHGKLAWRALHPVLPSKADFPYTIRVLSDITESNGSSSMATVCGGCLALMDAGVPLTRPVSGIAMGLILEKDGFAILSDIMGDEDHLGDMDFKVAGTEKGITSLQMDIKVAGITEEIMQKALEQAKGGRAHILGEMSKALGEVRSEISNLAPRIETMSVPKDKIRDVIGTGGKVIREIVATTGAKVDIEDDGTVRLSSSDPANIEAAREWINGIVEEPEVGKIYNGKVVNIVDFGAFVNFMGGRDGLVHVSEIKNERVNKVSDVLSEGQEVKVKVLEIDNRGKVRLSMRVVDQETGAELDDNRPPRENAERRGGERPRRDRGPRRESGDRPARRDMEPEFAPAFLRKDS.

Mg(2+)-binding residues include Asp484 and Asp490. Residues 551–610 (PRIETMSVPKDKIRDVIGTGGKVIREIVATTGAKVDIEDDGTVRLSSSDPANIEAAREWI) form the KH domain. In terms of domain architecture, S1 motif spans 620–688 (GKIYNGKVVN…NRGKVRLSMR (69 aa)). The interval 693 to 748 (ETGAELDDNRPPRENAERRGGERPRRDRGPRRESGDRPARRDMEPEFAPAFLRKDS) is disordered. Over residues 699–736 (DDNRPPRENAERRGGERPRRDRGPRRESGDRPARRDME) the composition is skewed to basic and acidic residues.

The protein belongs to the polyribonucleotide nucleotidyltransferase family. It depends on Mg(2+) as a cofactor.

It localises to the cytoplasm. It carries out the reaction RNA(n+1) + phosphate = RNA(n) + a ribonucleoside 5'-diphosphate. Functionally, involved in mRNA degradation. Catalyzes the phosphorolysis of single-stranded polyribonucleotides processively in the 3'- to 5'-direction. The chain is Polyribonucleotide nucleotidyltransferase from Zymomonas mobilis subsp. mobilis (strain ATCC 31821 / ZM4 / CP4).